Consider the following 423-residue polypeptide: UDP-N-acetylglucosamine 1-carboxyvinyltransferase 1 (423 aa).

23–24 provides a ligand contact to phosphoenolpyruvate; sequence KN. Arginine 96 provides a ligand contact to UDP-N-acetyl-alpha-D-glucosamine. Cysteine 120 (proton donor) is an active-site residue. Cysteine 120 is subject to 2-(S-cysteinyl)pyruvic acid O-phosphothioketal. UDP-N-acetyl-alpha-D-glucosamine is bound by residues 125–129, aspartate 309, and valine 331; that span reads RPIDL.

This sequence belongs to the EPSP synthase family. MurA subfamily.

It is found in the cytoplasm. It carries out the reaction phosphoenolpyruvate + UDP-N-acetyl-alpha-D-glucosamine = UDP-N-acetyl-3-O-(1-carboxyvinyl)-alpha-D-glucosamine + phosphate. It functions in the pathway cell wall biogenesis; peptidoglycan biosynthesis. Functionally, cell wall formation. Adds enolpyruvyl to UDP-N-acetylglucosamine. In Streptococcus thermophilus (strain CNRZ 1066), this protein is UDP-N-acetylglucosamine 1-carboxyvinyltransferase 1.